The primary structure comprises 256 residues: MPASRSLGMSSDARVNNESGFILHTYPFKETSVVAEVFTRAHGRVALIARGARRPASALRGLMQPFSPLLLSWFGKADLKTLHAAEWQGGLVAPQGRALMCGFYLNELLLRLLARGDAHERLYDRYVETLDQLARSAAASDAERATAFERILRRFEKNLLSEIGYGATFDVEAGGAAIEPGAAYVFQPERGALRAAGQPGCPVSGQTLLDLAGDSFERLATLGEAKALMRALINHTLGTKPLYTRQLLRELTELNP.

This sequence belongs to the RecO family.

In terms of biological role, involved in DNA repair and RecF pathway recombination. The chain is DNA repair protein RecO from Thiobacillus denitrificans (strain ATCC 25259 / T1).